We begin with the raw amino-acid sequence, 124 residues long: S-adenosylmethionine decarboxylase proenzyme (124 aa).

Ser-63 acts as the Schiff-base intermediate with substrate; via pyruvic acid in catalysis. A Pyruvic acid (Ser); by autocatalysis modification is found at Ser-63. His-68 acts as the Proton acceptor; for processing activity in catalysis. Cys-83 acts as the Proton donor; for catalytic activity in catalysis.

The protein belongs to the prokaryotic AdoMetDC family. Type 1 subfamily. As to quaternary structure, heterotetramer of two alpha and two beta chains arranged as a dimer of alpha/beta heterodimers. Pyruvate is required as a cofactor. Post-translationally, is synthesized initially as an inactive proenzyme. Formation of the active enzyme involves a self-maturation process in which the active site pyruvoyl group is generated from an internal serine residue via an autocatalytic post-translational modification. Two non-identical subunits are generated from the proenzyme in this reaction, and the pyruvate is formed at the N-terminus of the alpha chain, which is derived from the carboxyl end of the proenzyme. The post-translation cleavage follows an unusual pathway, termed non-hydrolytic serinolysis, in which the side chain hydroxyl group of the serine supplies its oxygen atom to form the C-terminus of the beta chain, while the remainder of the serine residue undergoes an oxidative deamination to produce ammonia and the pyruvoyl group blocking the N-terminus of the alpha chain.

The enzyme catalyses S-adenosyl-L-methionine + H(+) = S-adenosyl 3-(methylsulfanyl)propylamine + CO2. It functions in the pathway amine and polyamine biosynthesis; S-adenosylmethioninamine biosynthesis; S-adenosylmethioninamine from S-adenosyl-L-methionine: step 1/1. Its function is as follows. Catalyzes the decarboxylation of S-adenosylmethionine to S-adenosylmethioninamine (dcAdoMet), the propylamine donor required for the synthesis of the polyamines spermine and spermidine from the diamine putrescine. The protein is S-adenosylmethionine decarboxylase proenzyme of Caldanaerobacter subterraneus subsp. tengcongensis (strain DSM 15242 / JCM 11007 / NBRC 100824 / MB4) (Thermoanaerobacter tengcongensis).